The chain runs to 216 residues: Somatotropin (216 aa).

Positions 1 to 26 (MAADSQTSRLLTFTLLCLLWPQEAGA) are cleaved as a signal peptide. His45 serves as a coordination point for Zn(2+). A disulfide bridge links Cys78 with Cys189. Position 131 is a phosphoserine (Ser131). Glu198 contacts Zn(2+). A disulfide bond links Cys206 and Cys214.

It belongs to the somatotropin/prolactin family.

It is found in the secreted. In terms of biological role, plays an important role in growth control. Its major role in stimulating body growth is to stimulate the liver and other tissues to secrete IGF1. It stimulates both the differentiation and proliferation of myoblasts. It also stimulates amino acid uptake and protein synthesis in muscle and other tissues. In Mesocricetus auratus (Golden hamster), this protein is Somatotropin (GH1).